Consider the following 272-residue polypeptide: MLTKRIIPCLDIKEGRVVKGTNFVELRDAGDPVELSKIYNEQGADELVFLDITASFEKRDIIIDVVKRTAEQVFIPLTVGGGIKTVDDFRKILRAGADKISINTSAVKTPELIKEASEIFGTQCVVVAMDVKRNYITNPQNENLKDKNIFETKLGSCWFEVYIYGGREGTGIDAIDWAKKVENLGAGEILLTSMDADGTKDGYDLVLTRAISENTKLPIIASGGCGNSDHVVDAFKDGKADAALMASILHYRECTVNDLKKEVEKNNIPVRF.

Active-site residues include aspartate 11 and aspartate 130.

This sequence belongs to the HisA/HisF family. As to quaternary structure, heterodimer of HisH and HisF.

The protein localises to the cytoplasm. It carries out the reaction 5-[(5-phospho-1-deoxy-D-ribulos-1-ylimino)methylamino]-1-(5-phospho-beta-D-ribosyl)imidazole-4-carboxamide + L-glutamine = D-erythro-1-(imidazol-4-yl)glycerol 3-phosphate + 5-amino-1-(5-phospho-beta-D-ribosyl)imidazole-4-carboxamide + L-glutamate + H(+). The protein operates within amino-acid biosynthesis; L-histidine biosynthesis; L-histidine from 5-phospho-alpha-D-ribose 1-diphosphate: step 5/9. Its function is as follows. IGPS catalyzes the conversion of PRFAR and glutamine to IGP, AICAR and glutamate. The HisF subunit catalyzes the cyclization activity that produces IGP and AICAR from PRFAR using the ammonia provided by the HisH subunit. This chain is Imidazole glycerol phosphate synthase subunit HisF, found in Methanococcus maripaludis (strain C7 / ATCC BAA-1331).